Reading from the N-terminus, the 116-residue chain is Large ribosomal subunit protein bL20 (116 aa).

This sequence belongs to the bacterial ribosomal protein bL20 family.

Functionally, binds directly to 23S ribosomal RNA and is necessary for the in vitro assembly process of the 50S ribosomal subunit. It is not involved in the protein synthesizing functions of that subunit. This chain is Large ribosomal subunit protein bL20, found in Desulfatibacillum aliphaticivorans.